Here is a 243-residue protein sequence, read N- to C-terminus: UDP-2,3-diacylglucosamine hydrolase (243 aa).

Mn(2+) is bound by residues D8, H10, D41, N79, and H114. A substrate-binding site is contributed by 79-80; it reads NR. Residues D122, K164, K167, and H195 each contribute to the substrate site. Residues H195 and H197 each coordinate Mn(2+).

The protein belongs to the LpxH family. Requires Mn(2+) as cofactor.

It localises to the cell inner membrane. The catalysed reaction is UDP-2-N,3-O-bis[(3R)-3-hydroxytetradecanoyl]-alpha-D-glucosamine + H2O = 2-N,3-O-bis[(3R)-3-hydroxytetradecanoyl]-alpha-D-glucosaminyl 1-phosphate + UMP + 2 H(+). Its pathway is glycolipid biosynthesis; lipid IV(A) biosynthesis; lipid IV(A) from (3R)-3-hydroxytetradecanoyl-[acyl-carrier-protein] and UDP-N-acetyl-alpha-D-glucosamine: step 4/6. Hydrolyzes the pyrophosphate bond of UDP-2,3-diacylglucosamine to yield 2,3-diacylglucosamine 1-phosphate (lipid X) and UMP by catalyzing the attack of water at the alpha-P atom. Involved in the biosynthesis of lipid A, a phosphorylated glycolipid that anchors the lipopolysaccharide to the outer membrane of the cell. The polypeptide is UDP-2,3-diacylglucosamine hydrolase (Vibrio vulnificus (strain YJ016)).